The following is a 163-amino-acid chain: Phosphopantetheine adenylyltransferase (163 aa).

A substrate-binding site is contributed by Ser9. ATP is bound by residues 9 to 10 (SF) and His17. Lys41, Leu73, and Lys87 together coordinate substrate. ATP-binding positions include 88-90 (GLR), Glu98, and 124-130 (YTYVSST).

Belongs to the bacterial CoaD family. Homohexamer. The cofactor is Mg(2+).

The protein localises to the cytoplasm. The catalysed reaction is (R)-4'-phosphopantetheine + ATP + H(+) = 3'-dephospho-CoA + diphosphate. The protein operates within cofactor biosynthesis; coenzyme A biosynthesis; CoA from (R)-pantothenate: step 4/5. Its function is as follows. Reversibly transfers an adenylyl group from ATP to 4'-phosphopantetheine, yielding dephospho-CoA (dPCoA) and pyrophosphate. This Fusobacterium nucleatum subsp. nucleatum (strain ATCC 25586 / DSM 15643 / BCRC 10681 / CIP 101130 / JCM 8532 / KCTC 2640 / LMG 13131 / VPI 4355) protein is Phosphopantetheine adenylyltransferase.